Reading from the N-terminus, the 158-residue chain is Glycosyl-phosphatidylinositol-anchored molecule-like protein (158 aa).

Positions 1 to 17 are cleaved as a signal peptide; sequence MLLFALLLAMELPLVAA. In terms of domain architecture, UPAR/Ly6 spans 29–134; sequence LRCHDCAVIN…DEVTEEELPE (106 aa). Cystine bridges form between C31-C55, C34-C42, C48-C73, C77-C104, and C105-C110.

It localises to the cell membrane. Functionally, may play a role in the apoptotic pathway or cell-cycle regulation induced by p53/TP53 after DNA damage. The polypeptide is Glycosyl-phosphatidylinositol-anchored molecule-like protein (GML) (Homo sapiens (Human)).